A 468-amino-acid polypeptide reads, in one-letter code: ATP synthase subunit beta (468 aa).

155–162 (GGAGVGKT) is an ATP binding site.

The protein belongs to the ATPase alpha/beta chains family. As to quaternary structure, F-type ATPases have 2 components, CF(1) - the catalytic core - and CF(0) - the membrane proton channel. CF(1) has five subunits: alpha(3), beta(3), gamma(1), delta(1), epsilon(1). CF(0) has three main subunits: a(1), b(2) and c(9-12). The alpha and beta chains form an alternating ring which encloses part of the gamma chain. CF(1) is attached to CF(0) by a central stalk formed by the gamma and epsilon chains, while a peripheral stalk is formed by the delta and b chains.

The protein resides in the cell membrane. It catalyses the reaction ATP + H2O + 4 H(+)(in) = ADP + phosphate + 5 H(+)(out). Produces ATP from ADP in the presence of a proton gradient across the membrane. The catalytic sites are hosted primarily by the beta subunits. This chain is ATP synthase subunit beta, found in Streptococcus gordonii (strain Challis / ATCC 35105 / BCRC 15272 / CH1 / DL1 / V288).